The primary structure comprises 375 residues: Beta-1,3-N-acetylglucosaminyltransferase lunatic fringe (375 aa).

The Cytoplasmic segment spans residues 1 to 8 (MLKNWGKK). A helical; Signal-anchor for type II membrane protein membrane pass occupies residues 9–29 (LLLSIVGATLTCLLVLVVDQQ). The Lumenal portion of the chain corresponds to 30–375 (SRHMLETQSD…TPWCPWKAAY (346 aa)). The disordered stretch occupies residues 53–73 (DLDPANPGDGGDPANSAQDSG). Arg125 is a binding site for substrate. Asn163 is a glycosylation site (N-linked (GlcNAc...) asparagine). Cystine bridges form between Cys164–Cys175 and Cys193–Cys256. A substrate-binding site is contributed by Asp197. Residue Asp198 coordinates Mn(2+). Residue Asp286 is part of the active site. His310 provides a ligand contact to Mn(2+). The cysteines at positions 360 and 369 are disulfide-linked.

This sequence belongs to the glycosyltransferase 31 family. The cofactor is Mn(2+). Co(2+) serves as cofactor. In terms of processing, a soluble form may be derived from the membrane form by proteolytic processing. As to expression, detected in the neural tube, the eye and the otic vesicle, expression coincides with the region that produces the medial, intermediate and lateral neurons.

The protein localises to the golgi apparatus membrane. It catalyses the reaction 3-O-(alpha-L-fucosyl)-L-threonyl-[EGF-like domain protein] + UDP-N-acetyl-alpha-D-glucosamine = 3-O-(N-acetyl-beta-D-glucosaminyl-(1-&gt;3)-alpha-L-fucosyl)-L-threonyl-[EGF-like domain protein] + UDP + H(+). The enzyme catalyses 3-O-(alpha-L-fucosyl)-L-seryl-[EGF-like domain protein] + UDP-N-acetyl-alpha-D-glucosamine = 3-O-(N-acetyl-beta-D-glucosaminyl-(1-&gt;3)-alpha-L-fucosyl)-L-seryl-[EGF-like domain protein] + UDP + H(+). Functionally, glycosyltransferase that initiates the elongation of O-linked fucose residues attached to EGF-like repeats in the extracellular domain of Notch molecules. Essential mediator of somite segmentation and patterning. May be involved in mesoderm development. The polypeptide is Beta-1,3-N-acetylglucosaminyltransferase lunatic fringe (lfng) (Xenopus laevis (African clawed frog)).